The chain runs to 452 residues: Bifunctional protein GlmU (452 aa).

Positions 1–226 (MKNIHAIILA…KFEIAGVNDK (226 aa)) are pyrophosphorylase. Residues 9–12 (LAAG), Lys23, Gln73, 78–79 (GT), 100–102 (YGD), Gly137, Glu151, Asn166, and Asn224 contribute to the UDP-N-acetyl-alpha-D-glucosamine site. Asp102 is a Mg(2+) binding site. A Mg(2+)-binding site is contributed by Asn224. Positions 227 to 247 (VQLAELERIFQINQATQFMQQ) are linker. The tract at residues 248–452 (GLSLKDPNRF…LKNWQRPTKK (205 aa)) is N-acetyltransferase. UDP-N-acetyl-alpha-D-glucosamine contacts are provided by Arg330 and Lys348. Catalysis depends on His360, which acts as the Proton acceptor. 2 residues coordinate UDP-N-acetyl-alpha-D-glucosamine: Tyr363 and Asn374. Residues Ala377, 383 to 384 (NY), Ser402, Ala420, and Arg437 each bind acetyl-CoA.

In the N-terminal section; belongs to the N-acetylglucosamine-1-phosphate uridyltransferase family. This sequence in the C-terminal section; belongs to the transferase hexapeptide repeat family. Homotrimer. It depends on Mg(2+) as a cofactor.

The protein localises to the cytoplasm. It carries out the reaction alpha-D-glucosamine 1-phosphate + acetyl-CoA = N-acetyl-alpha-D-glucosamine 1-phosphate + CoA + H(+). The catalysed reaction is N-acetyl-alpha-D-glucosamine 1-phosphate + UTP + H(+) = UDP-N-acetyl-alpha-D-glucosamine + diphosphate. It participates in nucleotide-sugar biosynthesis; UDP-N-acetyl-alpha-D-glucosamine biosynthesis; N-acetyl-alpha-D-glucosamine 1-phosphate from alpha-D-glucosamine 6-phosphate (route II): step 2/2. The protein operates within nucleotide-sugar biosynthesis; UDP-N-acetyl-alpha-D-glucosamine biosynthesis; UDP-N-acetyl-alpha-D-glucosamine from N-acetyl-alpha-D-glucosamine 1-phosphate: step 1/1. It functions in the pathway bacterial outer membrane biogenesis; LPS lipid A biosynthesis. Its function is as follows. Catalyzes the last two sequential reactions in the de novo biosynthetic pathway for UDP-N-acetylglucosamine (UDP-GlcNAc). The C-terminal domain catalyzes the transfer of acetyl group from acetyl coenzyme A to glucosamine-1-phosphate (GlcN-1-P) to produce N-acetylglucosamine-1-phosphate (GlcNAc-1-P), which is converted into UDP-GlcNAc by the transfer of uridine 5-monophosphate (from uridine 5-triphosphate), a reaction catalyzed by the N-terminal domain. This is Bifunctional protein GlmU from Ruthia magnifica subsp. Calyptogena magnifica.